The chain runs to 289 residues: MIGPIVVLHLICAVGFSIFMLQYYNILYDKPACNHMGGCEMQDIYKVTENSTEDENGTLTTTTIKPVKTPACPVKECRGDEFCCKLCSEVKGNDYSERPIHMESTLYIHNPAIITIAIVGVVIGVFIIVCIANICRMKSGKRGTTFVRFLIGITLFLLFLTLAGSVAFIVISIISDFDYYKDCHAKLTLNISWGFVCGILAISYSTSILPSFTRIMRAEQLKRDALDIPDHDESTQMLIKADRLKHEPIEKPGLFSTIARYLLTLCLLWWPAITIYFIGVGQGRWLPIV.

5 helical membrane passes run 1–21 (MIGP…IFML), 112–132 (AIIT…VCIA), 151–171 (IGIT…FIVI), 189–209 (LNIS…TSIL), and 261–281 (YLLT…IGVG).

It is found in the host membrane. The polypeptide is Putative transmembrane protein ORF111 (Ostreid herpesvirus 1 (isolate France) (OsHV-1)).